A 113-amino-acid chain; its full sequence is Probable UPF0122 protein (113 aa).

This sequence belongs to the UPF0122 family.

Its function is as follows. Might take part in the signal recognition particle (SRP) pathway. This is inferred from the conservation of its genetic proximity to ftsY/ffh. May be a regulatory protein. This chain is Probable UPF0122 protein, found in Mycoplasma mycoides.